The sequence spans 172 residues: Oleosin 18 kDa (172 aa).

The residue at position 2 (alanine 2) is an N-acetylalanine. Residues 2-38 (ADRDRAGQYYQQQRGQVGETVKGILPEKAPSASQALT) form a polar region. The hydrophobic stretch occupies residues 39 to 110 (VATLFPLGGL…GGLSSLTFLA (72 aa)). The next 3 helical transmembrane spans lie at 42-62 (LFPL…ASVV), 70-90 (VFLI…LAVA), and 91-111 (GFLT…FLAN). The interval 147 to 172 (HAIQGRADQAGTGAGAGGGAGTKTSS) is disordered. Over residues 158–172 (TGAGAGGGAGTKTSS) the composition is skewed to gly residues.

It belongs to the oleosin family.

The protein localises to the lipid droplet. It is found in the membrane. In terms of biological role, may have a structural role to stabilize the lipid body during desiccation of the seed by preventing coalescence of the oil. Probably interacts with both lipid and phospholipid moieties of lipid bodies. May also provide recognition signals for specific lipase anchorage in lipolysis during seedling growth. The sequence is that of Oleosin 18 kDa (OLE18) from Oryza sativa subsp. indica (Rice).